The chain runs to 1250 residues: Phospholipid-transporting ATPase IC (1250 aa).

Composition is skewed to acidic residues over residues Met-1–Ser-13 and Ser-24–Pro-40. The segment at Met-1–Ser-52 is disordered. At Met-1 to Gln-133 the chain is on the cytoplasmic side. A helical transmembrane segment spans residues Ile-134–Ala-154. The Exoplasmic loop portion of the chain corresponds to Ile-155–Met-338. The helical transmembrane segment at Val-339–Phe-359 threads the bilayer. Residues Trp-360–Gly-385 lie on the Cytoplasmic side of the membrane. The helical transmembrane segment at Phe-386–Val-406 threads the bilayer. Topologically, residues Ser-407–Asn-956 are exoplasmic loop. The active-site 4-aspartylphosphate intermediate is Asp-454. Residues Asp-454, Lys-455, Thr-456, Glu-553, Phe-594, Lys-617, Arg-650, Thr-730, Gly-731, Asp-732, Arg-865, and Lys-871 each contribute to the ATP site. Asp-454 contributes to the Mg(2+) binding site. Thr-456 serves as a coordination point for Mg(2+). Asp-891 is a binding site for Mg(2+). ATP contacts are provided by Asn-894 and Asp-895. Residue Asp-895 participates in Mg(2+) binding. The helical transmembrane segment at Phe-957 to Val-977 threads the bilayer. Residues Tyr-978–Asp-980 are Cytoplasmic-facing. Residues Trp-981–Leu-1001 form a helical membrane-spanning segment. Topologically, residues Asp-1002–Ser-1034 are exoplasmic loop. The helical transmembrane segment at Leu-1035–Leu-1055 threads the bilayer. The Cytoplasmic portion of the chain corresponds to Thr-1056 to Ser-1069. Residues Phe-1070–Thr-1090 traverse the membrane as a helical segment. The Exoplasmic loop segment spans residues Ser-1091–Tyr-1092. Residues Trp-1093–Phe-1113 traverse the membrane as a helical segment. Residues Asp-1114–Ser-1117 are Cytoplasmic-facing. A helical transmembrane segment spans residues Ala-1118–Leu-1138. Over Arg-1139–Gln-1140 the chain is Exoplasmic loop. A helical membrane pass occupies residues Pro-1141–Leu-1161. Topologically, residues Arg-1162–Thr-1250 are cytoplasmic.

Belongs to the cation transport ATPase (P-type) (TC 3.A.3) family. Type IV subfamily. As to quaternary structure, component of a P4-ATPase flippase complex which consists of a catalytic alpha subunit and an accessory beta subunit. The flippase ATP8B1:TMEM30A complex can form an intermediate phosphoenzyme in vitro. Also interacts with beta subunit TMEM30B. Mg(2+) is required as a cofactor.

It is found in the cell membrane. Its subcellular location is the apical cell membrane. The protein localises to the cell projection. The protein resides in the stereocilium. It localises to the endoplasmic reticulum. It is found in the golgi apparatus. It carries out the reaction ATP + H2O + phospholipidSide 1 = ADP + phosphate + phospholipidSide 2.. It catalyses the reaction a 1,2-diacyl-sn-glycero-3-phospho-L-serine(out) + ATP + H2O = a 1,2-diacyl-sn-glycero-3-phospho-L-serine(in) + ADP + phosphate + H(+). Catalytic component of a P4-ATPase flippase complex which catalyzes the hydrolysis of ATP coupled to the transport of aminophospholipids from the outer to the inner leaflet of various membranes and ensures the maintenance of asymmetric distribution of phospholipids. Phospholipid translocation also seems to be implicated in vesicle formation and in uptake of lipid signaling molecules. May also participate in the establishment of the canalicular membrane integrity by ensuring asymmetric distribution of phospholipids in the canicular membrane. This is Phospholipid-transporting ATPase IC (atp8b1) from Xenopus tropicalis (Western clawed frog).